Here is a 1070-residue protein sequence, read N- to C-terminus: DNA-directed RNA polymerase subunit beta (1070 aa).

It belongs to the RNA polymerase beta chain family. In terms of assembly, in plastids the minimal PEP RNA polymerase catalytic core is composed of four subunits: alpha, beta, beta', and beta''. When a (nuclear-encoded) sigma factor is associated with the core the holoenzyme is formed, which can initiate transcription.

Its subcellular location is the plastid. The protein resides in the chloroplast. It carries out the reaction RNA(n) + a ribonucleoside 5'-triphosphate = RNA(n+1) + diphosphate. Functionally, DNA-dependent RNA polymerase catalyzes the transcription of DNA into RNA using the four ribonucleoside triphosphates as substrates. In Citrus sinensis (Sweet orange), this protein is DNA-directed RNA polymerase subunit beta.